Consider the following 231-residue polypeptide: Octanoyl-[acyl-carrier-protein]:protein N-octanoyltransferase LIPT2, mitochondrial (231 aa).

A mitochondrion-targeting transit peptide spans 1 to 31; it reads MRQPAVRLVRLGRVPYAELLGLQDRWLRRLQ. The region spanning 41-224 is the BPL/LPL catalytic domain; the sequence is GTEAGALLLC…AFKEIYKCTL (184 aa). Residues 85-92, 154-156, and 167-169 contribute to the substrate site; these read RGGLATFH, AIG, and GLA. The active-site Acyl-thioester intermediate is C185.

Belongs to the LipB family.

It localises to the mitochondrion. The catalysed reaction is octanoyl-[ACP] + L-lysyl-[protein] = N(6)-octanoyl-L-lysyl-[protein] + holo-[ACP] + H(+). The protein operates within protein modification; protein lipoylation via endogenous pathway; protein N(6)-(lipoyl)lysine from octanoyl-[acyl-carrier-protein]: step 1/2. Its function is as follows. Catalyzes the transfer of endogenously produced octanoic acid from octanoyl-acyl-carrier-protein (octanoyl-ACP) onto the lipoyl domains of lipoate-dependent enzymes such as the protein H of the glycine cleavage system (GCSH). Lipoyl-ACP can also act as a substrate although octanoyl-ACP is likely to be the physiological substrate. This chain is Octanoyl-[acyl-carrier-protein]:protein N-octanoyltransferase LIPT2, mitochondrial, found in Homo sapiens (Human).